A 496-amino-acid polypeptide reads, in one-letter code: Cytochrome P450 71B12 (496 aa).

A helical transmembrane segment spans residues 2 to 22 (SLWYIIVAFVFFSSMIIVRII). Residue Cys436 coordinates heme.

It belongs to the cytochrome P450 family. Heme is required as a cofactor.

The protein resides in the membrane. The protein is Cytochrome P450 71B12 (CYP71B12) of Arabidopsis thaliana (Mouse-ear cress).